The chain runs to 77 residues: Large ribosomal subunit protein bL28 (77 aa).

The protein belongs to the bacterial ribosomal protein bL28 family.

This is Large ribosomal subunit protein bL28 from Polynucleobacter necessarius subsp. necessarius (strain STIR1).